The following is a 158-amino-acid chain: Ribosome maturation factor RimP (158 aa).

This sequence belongs to the RimP family.

The protein resides in the cytoplasm. Functionally, required for maturation of 30S ribosomal subunits. The sequence is that of Ribosome maturation factor RimP from Streptococcus suis (strain 98HAH33).